Reading from the N-terminus, the 520-residue chain is Glutamate--cysteine ligase (520 aa).

This sequence belongs to the glutamate--cysteine ligase type 1 family. Type 1 subfamily.

It carries out the reaction L-cysteine + L-glutamate + ATP = gamma-L-glutamyl-L-cysteine + ADP + phosphate + H(+). Its pathway is sulfur metabolism; glutathione biosynthesis; glutathione from L-cysteine and L-glutamate: step 1/2. The protein is Glutamate--cysteine ligase of Serratia proteamaculans (strain 568).